Here is a 159-residue protein sequence, read N- to C-terminus: Probable cyclic pyranopterin monophosphate synthase (159 aa).

Substrate-binding positions include 75–77 (LCH) and 111–112 (ME). The active site involves D126.

It belongs to the MoaC family. In terms of assembly, homohexamer; trimer of dimers.

It carries out the reaction (8S)-3',8-cyclo-7,8-dihydroguanosine 5'-triphosphate = cyclic pyranopterin phosphate + diphosphate. The protein operates within cofactor biosynthesis; molybdopterin biosynthesis. In terms of biological role, catalyzes the conversion of (8S)-3',8-cyclo-7,8-dihydroguanosine 5'-triphosphate to cyclic pyranopterin monophosphate (cPMP). This Pyrococcus abyssi (strain GE5 / Orsay) protein is Probable cyclic pyranopterin monophosphate synthase.